A 110-amino-acid chain; its full sequence is Large ribosomal subunit protein uL22 (110 aa).

The protein belongs to the universal ribosomal protein uL22 family. In terms of assembly, part of the 50S ribosomal subunit.

In terms of biological role, this protein binds specifically to 23S rRNA; its binding is stimulated by other ribosomal proteins, e.g. L4, L17, and L20. It is important during the early stages of 50S assembly. It makes multiple contacts with different domains of the 23S rRNA in the assembled 50S subunit and ribosome. The globular domain of the protein is located near the polypeptide exit tunnel on the outside of the subunit, while an extended beta-hairpin is found that lines the wall of the exit tunnel in the center of the 70S ribosome. The protein is Large ribosomal subunit protein uL22 of Acidovorax ebreus (strain TPSY) (Diaphorobacter sp. (strain TPSY)).